A 203-amino-acid chain; its full sequence is Glutathione S-transferase (203 aa).

The GST N-terminal domain maps to 2 to 79 (PDYKVYYFNV…YLANQVGLAG (78 aa)). Residues tyrosine 8, tryptophan 39, lysine 43, 49 to 51 (GQM), and 63 to 64 (QS) contribute to the glutathione site. The region spanning 81–203 (DDWENLMIDT…YIAKRPITEV (123 aa)) is the GST C-terminal domain.

This sequence belongs to the GST superfamily. Sigma family. As to quaternary structure, homodimer.

It catalyses the reaction RX + glutathione = an S-substituted glutathione + a halide anion + H(+). Its function is as follows. Conjugation of reduced glutathione to a wide number of exogenous and endogenous hydrophobic electrophiles. This chain is Glutathione S-transferase (GstS1), found in Anopheles gambiae (African malaria mosquito).